A 146-amino-acid chain; its full sequence is uncharacterized protein (146 aa).

The N-acetyltransferase domain occupies 7 to 146 (LDINYKTDEL…DGHDVLVWTP (140 aa)).

This is an uncharacterized protein from Staphylococcus saprophyticus subsp. saprophyticus (strain ATCC 15305 / DSM 20229 / NCIMB 8711 / NCTC 7292 / S-41).